A 181-amino-acid polypeptide reads, in one-letter code: ABC transporter E family member 3 (181 aa).

The 157-residue stretch at 20–176 (SQIIVMLGEN…KAAFARFHNG (157 aa)) folds into the ABC transporter domain. 27–34 (GENGTGKT) contacts ATP.

Belongs to the ABC transporter superfamily. ABCE family. Mostly expressed in roots and leaves, and, to a lower extent, in stems, flowers and siliques.

In Arabidopsis thaliana (Mouse-ear cress), this protein is ABC transporter E family member 3 (ABCE3).